Reading from the N-terminus, the 332-residue chain is Ribose operon repressor (332 aa).

An HTH lacI-type domain is found at 2-56 (ATMKDIARLAQVSTSTVSHVINGSRFVSDEIREKVMRIVAELNYTPSAVARSLKV). The H-T-H motif DNA-binding region spans 4 to 23 (MKDIARLAQVSTSTVSHVIN).

In terms of biological role, transcriptional repressor for the ribose rbsDACBK operon. The polypeptide is Ribose operon repressor (rbsR) (Haemophilus influenzae (strain ATCC 51907 / DSM 11121 / KW20 / Rd)).